Consider the following 1018-residue polypeptide: Pleckstrin homology domain-containing family M member 2 (1018 aa).

Met-1 bears the N-acetylmethionine mark. The segment at 1–289 (MEPREVKDRI…PDQPDACTEL (289 aa)) is interaction with KIF5B. Positions 36-158 (RNHDKVLQRL…IRFDLDLDAP (123 aa)) constitute an RUN domain. 5 disordered regions span residues 210 to 367 (SAIA…SSEL), 407 to 440 (TWCS…SEGL), 452 to 520 (ESPS…DSQL), 526 to 545 (EPLV…EPGT), and 555 to 583 (DQPS…THPS). Residues 230-245 (STASDLTSSKTSTKSP) are compositionally biased toward low complexity. Polar residues predominate over residues 258 to 270 (ETASSDTTPVHTT). The span at 294-306 (VTKKKKIGKKKKT) shows a compositional bias: basic residues. Composition is skewed to polar residues over residues 316-325 (HPTSSQQKCG) and 347-367 (VLAS…SSEL). A Phosphoserine modification is found at Ser-423. The 103-residue stretch at 770 to 872 (TITKEGMLHY…WMQHLCQAVS (103 aa)) folds into the PH domain.

As to quaternary structure, interacts with KLC2 (via TPR repeats). Interacts with KIF5B. Interacts with BORCS5. Interacts (via RUN domain) with ARL8B (GTP-bound form); PLEKHM1 and PLEKHM2 compete for interaction with ARL8B. Interacts with ARL8A.

It is found in the cytoplasm. It localises to the lysosome membrane. Its function is as follows. Plays a role in lysosomes movement and localization at the cell periphery acting as an effector of ARL8B. Required for ARL8B to exert its effects on lysosome location, recruits kinesin-1 to lysosomes and hence direct their movement toward microtubule plus ends. Binding to ARL8B provides a link from lysosomal membranes to plus-end-directed motility. Critical factor involved in NK cell-mediated cytotoxicity. Drives the polarization of cytolytic granules and microtubule-organizing centers (MTOCs) toward the immune synapse between effector NK lymphocytes and target cells. Required for maintenance of the Golgi apparatus organization. May play a role in membrane tubulation. The sequence is that of Pleckstrin homology domain-containing family M member 2 from Mus musculus (Mouse).